The chain runs to 118 residues: Cycloviolacin-O11 (118 aa).

Residues 1–22 form the signal peptide; it reads MEMKNMVVGLFLIAAFALPALA. Positions 23–84 are excised as a propeptide; the sequence is TSFEKDFITH…THSNSINALG (62 aa). Positions 85–115 form a cross-link, cyclopeptide (Gly-Asn); it reads GTLPCGESCVWIPCISAVVGCSCKSKVCYKN. Intrachain disulfides connect C89–C105, C93–C107, and C98–C112. A propeptide spanning residues 116 to 118 is cleaved from the precursor; sequence SLA.

In terms of processing, cycloviolacin-O11 is a cyclic peptide. In terms of tissue distribution, expressed in leaves, petals and petioles but not in roots and runners (at protein level).

Probably participates in a plant defense mechanism. This is Cycloviolacin-O11 (Voc2) from Viola odorata (Sweet violet).